The chain runs to 216 residues: Peroxiredoxin (216 aa).

A Thioredoxin domain is found at 2 to 158 (VVIGEKFPEV…ILRLVKALKV (157 aa)). C46 serves as the catalytic Cysteine sulfenic acid (-SOH) intermediate. R121 is a binding site for substrate. An intrachain disulfide couples C205 to C211.

Belongs to the peroxiredoxin family. Prx6 subfamily. As to quaternary structure, homodecamer. Pentamer of dimers that assemble into a ring structure.

It is found in the cytoplasm. It catalyses the reaction a hydroperoxide + [thioredoxin]-dithiol = an alcohol + [thioredoxin]-disulfide + H2O. In terms of biological role, thiol-specific peroxidase that catalyzes the reduction of hydrogen peroxide and organic hydroperoxides to water and alcohols, respectively. Plays a role in cell protection against oxidative stress by detoxifying peroxides. This is Peroxiredoxin from Thermococcus kodakarensis (strain ATCC BAA-918 / JCM 12380 / KOD1) (Pyrococcus kodakaraensis (strain KOD1)).